Consider the following 316-residue polypeptide: Olfactory receptor 56B2 (316 aa).

Topologically, residues 1 to 32 (MVLQELRDSNSSKFQVSEFILMGFPGIHSWQH) are extracellular. Residue Asn-10 is glycosylated (N-linked (GlcNAc...) asparagine). A helical membrane pass occupies residues 33-53 (WLSLPLALLYLLALSANILIL). Residues 54 to 61 (IIINKEAA) lie on the Cytoplasmic side of the membrane. Residues 62–82 (LHQPMYYFLGILAMADIGLAT) traverse the membrane as a helical segment. The Extracellular portion of the chain corresponds to 83–106 (TIMPKILAILWFNAKTISLLECFA). An intrachain disulfide couples Cys-104 to Cys-196. The chain crosses the membrane as a helical span at residues 107 to 127 (QMYAIHCFVAMESSTFVCMAI). At 128–146 (DRYVAICRPLRYPSIITES) the chain is on the cytoplasmic side. The helical transmembrane segment at 147–167 (FVFKANGFMALRNSLCLISVP) threads the bilayer. At 168–203 (LLAAQRHYCSQNQIEHCLCSNLGVTSLSCDDRRINS) the chain is on the extracellular side. Residues 204–224 (INQVLLAWTLMGSDLGLIILS) traverse the membrane as a helical segment. Residues 225-244 (YALILYSVLKLNSPEAASKA) are Cytoplasmic-facing. A helical membrane pass occupies residues 245–265 (LSTCTSHLILILFFYTVIIVI). At 266-279 (SITRSTGMRVPLIP) the chain is on the extracellular side. Residues 280–300 (VLLNVLHNVIPPALNPMVYAL) form a helical membrane-spanning segment. The Cytoplasmic segment spans residues 301-316 (KNKELRQGLYKVLRLE).

The protein belongs to the G-protein coupled receptor 1 family.

It is found in the cell membrane. Odorant receptor. This Homo sapiens (Human) protein is Olfactory receptor 56B2.